Here is a 271-residue protein sequence, read N- to C-terminus: Aquaporin-1 (271 aa).

The Cytoplasmic segment spans residues 1–11 (MASEFKKKIFW). A helical membrane pass occupies residues 12–29 (RAVVAEFLAMTLFIFISI). Residues 30-48 (GSALGFQYPVRNNQTSGAA) lie on the Extracellular side of the membrane. Asn-42 carries an N-linked (GlcNAc...) asparagine glycan. Residues 49 to 67 (QDNVKVSLAFGLSIATLAQ) form a helical membrane-spanning segment. Residues 68–70 (SVG) lie on the Cytoplasmic side of the membrane. Residues 71 to 84 (HISGAHLNPAVTLG) lie within the membrane without spanning it. The short motif at 78-80 (NPA) is the NPA 1 element. Residues 85-92 (LLLSCQIS) lie on the Cytoplasmic side of the membrane. A helical membrane pass occupies residues 93–111 (VLRAVMYIIAQCVGAIVAT). At 112–135 (AILSGITSSLPGNSLGLNSLAPGV) the chain is on the extracellular side. Residues 136-155 (DSGQGLGIEIIGTLQLVLCV) traverse the membrane as a helical segment. Residues 156-165 (LATTDRRRRD) are Cytoplasmic-facing. Residues 166–183 (LGGSAPLAIGFSVALGHL) traverse the membrane as a helical segment. The Extracellular segment spans residues 184–188 (LAIDY). Residues 189-201 (TGCGINPARSFGS) lie within the membrane without spanning it. The short motif at 194–196 (NPA) is the NPA 2 element. The Extracellular portion of the chain corresponds to 202-208 (AVITHNF). A helical membrane pass occupies residues 209-226 (QDHWVFWVGPFIGGALAV). At 227–271 (LIYDFILAPRSSDLTDRVKVWTSGQVEEYDLDGDDINSRVEMKPK) the chain is on the cytoplasmic side. Ser-249 carries the phosphoserine modification. Tyr-255 carries the post-translational modification Phosphotyrosine. Position 264 is a phosphoserine (Ser-264).

This sequence belongs to the MIP/aquaporin (TC 1.A.8) family. In terms of assembly, homotetramer; each monomer provides an independent water pore. Component of the ankyrin-1 complex in the erythrocyte, composed of ANK1, RHCE, RHAG, SLC4A1, EPB42, GYPA, GYPB and AQP1. Interacts with EPHB2; involved in endolymph production in the inner ear. Identified in a complex with STOM. Interacts (via the N-terminal) with ANK1 (via ANK 1-5 repeats). Interacts (via the C-terminal) with EPB42.

It is found in the cell membrane. It carries out the reaction H2O(in) = H2O(out). The enzyme catalyses nitric oxide(out) = nitric oxide(in). It catalyses the reaction CO2(out) = CO2(in). The catalysed reaction is glycerol(in) = glycerol(out). It carries out the reaction H2O2(out) = H2O2(in). The enzyme catalyses K(+)(in) = K(+)(out). It catalyses the reaction Na(+)(in) = Na(+)(out). In terms of biological role, forms a water channel that facilitates the transport of water across cell membranes, playing a crucial role in water homeostasis in various tissues. Could also be permeable to small solutes including hydrogen peroxide, glycerol and gases such as amonnia (NH3), nitric oxide (NO) and carbon dioxide (CO2). Recruited to the ankyrin-1 complex, a multiprotein complex of the erythrocyte membrane, it could be part of a CO2 metabolon, linking facilitated diffusion of CO2 across the membrane, anion exchange of Cl(-)/HCO3(-) and interconversion of dissolved CO2 and carbonic acid in the cytosol. In vitro, it shows non-selective gated cation channel activity and may be permeable to cations like K(+) and Na(+) in vivo. In Sus scrofa (Pig), this protein is Aquaporin-1.